We begin with the raw amino-acid sequence, 543 residues long: MFS-type transporter pyvG (543 aa).

The tract at residues 24–71 (PPTEQQPGFQLPPPYRLAATRTQPQQQQEQEQEQEQAKPATRPPWNEP) is disordered. Asn-94 carries N-linked (GlcNAc...) asparagine glycosylation. Helical transmembrane passes span 101 to 121 (LLVYLEVNLITFMVYMSVAIF), 141 to 161 (LGMSLYVLGYGTGPMIWSPLS), 178 to 198 (IFLLLSIPTAVVNNVPGFLIL), 203 to 223 (GFFGSPGLATGGASIADVTGL), 230 to 250 (LYVWAVCSIAGPAVAPVIAGF), 259 to 279 (WSMWEVLWAAGGCFVFLLFLP), 335 to 355 (PAILFTTVYIGLVYAIFYSYF), 374 to 394 (GLIFLGAIVGTLLVLPGYFAF), 415 to 435 (LVPALCGSVLVPVGLFLFAWT), 440 to 460 (LHWVVPTVGLVLEVAGMSLVI), 476 to 496 (ASLFAINDLARAYLAFAAIMW), and 512 to 532 (LLAGLTVGCVGGMFTLYWWGP).

This sequence belongs to the major facilitator superfamily. CAR1 family.

The protein resides in the cell membrane. In terms of biological role, MFS-type transporter; part of the gene cluster that mediates the biosynthesis of pyranoviolin A, a pyranonigrin analog with a C-3 methoxy group. May be involved in the secretion of pyranoviolin A. This Aspergillus violaceofuscus (strain CBS 115571) protein is MFS-type transporter pyvG.